The following is a 286-amino-acid chain: 5'-3' exonuclease (286 aa).

Residues 172-270 (IKPKEFIDFL…IKLKDIILKK (99 aa)) enclose the 5'-3' exonuclease domain.

Functionally, 5'-3' exonuclease acting preferentially on double-stranded DNA. This is 5'-3' exonuclease from Buchnera aphidicola subsp. Acyrthosiphon pisum (strain APS) (Acyrthosiphon pisum symbiotic bacterium).